The following is a 435-amino-acid chain: Adenylosuccinate synthetase (435 aa).

Residues 17-23 (GDEGKGK) and 47-49 (GHT) each bind GTP. Asp18 serves as the catalytic Proton acceptor. Residues Asp18 and Gly47 each contribute to the Mg(2+) site. Residues 18-21 (DEGK), 45-48 (NAGH), Thr138, Arg152, Asn232, Thr247, and Arg311 each bind IMP. The active-site Proton donor is the His48. Residue 307–313 (VTTGRKR) coordinates substrate. GTP is bound by residues Arg313, 339 to 341 (KLD), and 421 to 423 (GVG).

This sequence belongs to the adenylosuccinate synthetase family. In terms of assembly, homodimer. The cofactor is Mg(2+).

It is found in the cytoplasm. The enzyme catalyses IMP + L-aspartate + GTP = N(6)-(1,2-dicarboxyethyl)-AMP + GDP + phosphate + 2 H(+). Its pathway is purine metabolism; AMP biosynthesis via de novo pathway; AMP from IMP: step 1/2. Functionally, plays an important role in the de novo pathway and in the salvage pathway of purine nucleotide biosynthesis. Catalyzes the first committed step in the biosynthesis of AMP from IMP. This Caenorhabditis briggsae protein is Adenylosuccinate synthetase.